The sequence spans 185 residues: uncharacterized protein (185 aa).

This is an uncharacterized protein from Haemophilus influenzae (strain ATCC 51907 / DSM 11121 / KW20 / Rd).